The sequence spans 255 residues: tRNA (guanine-N(1)-)-methyltransferase (255 aa).

Residues G119 and 139–144 (IGDFIL) each bind S-adenosyl-L-methionine.

The protein belongs to the RNA methyltransferase TrmD family. As to quaternary structure, homodimer.

The protein resides in the cytoplasm. It catalyses the reaction guanosine(37) in tRNA + S-adenosyl-L-methionine = N(1)-methylguanosine(37) in tRNA + S-adenosyl-L-homocysteine + H(+). In terms of biological role, specifically methylates guanosine-37 in various tRNAs. This chain is tRNA (guanine-N(1)-)-methyltransferase, found in Pseudoalteromonas translucida (strain TAC 125).